Consider the following 202-residue polypeptide: Superoxide dismutase [Fe] (202 aa).

Positions 27, 82, 164, and 168 each coordinate Fe cation.

Belongs to the iron/manganese superoxide dismutase family. As to quaternary structure, homodimer. Fe cation is required as a cofactor.

It carries out the reaction 2 superoxide + 2 H(+) = H2O2 + O2. In terms of biological role, destroys superoxide anion radicals which are normally produced within the cells and which are toxic to biological systems. In Enterococcus faecalis (strain ATCC 700802 / V583), this protein is Superoxide dismutase [Fe] (sodA).